The primary structure comprises 441 residues: Ribosomal protein uS12 methylthiotransferase RimO (441 aa).

One can recognise an MTTase N-terminal domain in the interval 7 to 117; that stretch reads PKISFVSLGC…VLDAVHRAKP (111 aa). [4Fe-4S] cluster is bound by residues Cys-16, Cys-52, Cys-81, Cys-148, Cys-152, and Cys-155. The region spanning 134 to 371 is the Radical SAM core domain; that stretch reads LTPRHYAYLK…MARQQAISAR (238 aa). The TRAM domain maps to 374–440; that stretch reads KRKVGTRQQI…AYDLHGTVAG (67 aa).

The protein belongs to the methylthiotransferase family. RimO subfamily. The cofactor is [4Fe-4S] cluster.

The protein resides in the cytoplasm. It carries out the reaction L-aspartate(89)-[ribosomal protein uS12]-hydrogen + (sulfur carrier)-SH + AH2 + 2 S-adenosyl-L-methionine = 3-methylsulfanyl-L-aspartate(89)-[ribosomal protein uS12]-hydrogen + (sulfur carrier)-H + 5'-deoxyadenosine + L-methionine + A + S-adenosyl-L-homocysteine + 2 H(+). Functionally, catalyzes the methylthiolation of an aspartic acid residue of ribosomal protein uS12. The polypeptide is Ribosomal protein uS12 methylthiotransferase RimO (Rhodopseudomonas palustris (strain HaA2)).